The chain runs to 303 residues: Taste receptor type 2 member 13 (303 aa).

Residues 1–7 (MESALPS) are Extracellular-facing. A helical membrane pass occupies residues 8 to 28 (IFTLVIIAEFIIGNLSNGFIV). Topologically, residues 29–55 (LINCIDWVSKRELSSVDKLLIILAISR) are cytoplasmic. The helical transmembrane segment at 56–76 (IGLIWEILVSWFLALHYLAIF) threads the bilayer. The Extracellular portion of the chain corresponds to 77-85 (VSGTGLRIM). The chain crosses the membrane as a helical span at residues 86–106 (IFSWIVSNHFNLWLATIFSIF). The Cytoplasmic segment spans residues 107–128 (YLLKIASFSSPAFLYLKWRVNK). Residues 129-149 (VILMILLGTLVFLFLNLIQIN) traverse the membrane as a helical segment. Residues 150–184 (MHIKDWLDRYERNTTWNFSMSDFETFSVSVKFTMT) lie on the Extracellular side of the membrane. N-linked (GlcNAc...) asparagine glycans are attached at residues Asn162 and Asn166. Residues 185–205 (MFSLTPFTVAFISFLLLIFSL) form a helical membrane-spanning segment. The Cytoplasmic portion of the chain corresponds to 206-232 (QKHLQKMQLNYKGHRDPRTKVHTNALK). Residues 233–253 (IVISFLLFYASFFLCVLISWI) traverse the membrane as a helical segment. At 254 to 261 (SELYQNTV) the chain is on the extracellular side. A helical transmembrane segment spans residues 262 to 282 (IYMLCETIGVFSPSSHSFLLI). Residues 283–303 (LGNAKLRQAFLLVAAKVWAKR) lie on the Cytoplasmic side of the membrane.

Belongs to the G-protein coupled receptor T2R family. Expressed in subsets of taste receptor cells of the tongue and palate epithelium and exclusively in gustducin-positive cells.

It is found in the membrane. Functionally, receptor that may play a role in the perception of bitterness and is gustducin-linked. May play a role in sensing the chemical composition of the gastrointestinal content. The activity of this receptor may stimulate alpha gustducin, mediate PLC-beta-2 activation and lead to the gating of TRPM5. The polypeptide is Taste receptor type 2 member 13 (TAS2R13) (Homo sapiens (Human)).